Here is a 246-residue protein sequence, read N- to C-terminus: CD99 antigen-like protein 2 (246 aa).

The N-terminal stretch at 1–25 (MVARLTTLLVCLVFSLATLVQRGYG) is a signal peptide. The Extracellular segment spans residues 26–160 (DFDDFNLEDA…PGSGAVTDPG (135 aa)). Positions 43 to 156 (KQSHFSTTTR…SQDDPGSGAV (114 aa)) are disordered. Composition is skewed to low complexity over residues 49 to 58 (TTTRRTGTTR) and 71 to 81 (TTTTTKRPGTT). Positions 100–109 (DDRNDLDGPK) are enriched in basic and acidic residues. O-linked (Xyl...) (chondroitin sulfate) serine glycosylation occurs at serine 153. The helical transmembrane segment at 161-181 (TIAGLVSALAAALLGAVSGYL) threads the bilayer. At 182–246 (SYQHRKFCFS…EPLAPERPRI (65 aa)) the chain is on the cytoplasmic side. Positions 223 to 246 (APPVTDSTQHSQPTEPLAPERPRI) are disordered. Polar residues predominate over residues 227 to 236 (TDSTQHSQPT).

It belongs to the CD99 family. Post-translationally, O-glycosylated. In terms of tissue distribution, expressed predominantly in the ventral medullary surface of the brain, moderate expression in the cerebral cortex and cerebellum. Low expression in lung and kidney. No expression in heart, stomach, intestine and skeletal muscle.

Its subcellular location is the cell membrane. It is found in the cell junction. It localises to the secreted. Plays a role in a late step of leukocyte extravasation helping cells to overcome the endothelial basement membrane. Acts at the same site as, but independently of, PECAM1. Homophilic adhesion molecule, but these interactions may not be required for cell aggregation. The sequence is that of CD99 antigen-like protein 2 (Cd99l2) from Rattus norvegicus (Rat).